Consider the following 159-residue polypeptide: Phosphopantetheine adenylyltransferase (159 aa).

T10 provides a ligand contact to substrate. ATP contacts are provided by residues T10–F11 and H18. Substrate-binding residues include K42, M74, and R88. ATP is bound by residues G89 to R91, E99, and W124 to S130.

The protein belongs to the bacterial CoaD family. In terms of assembly, homohexamer. It depends on Mg(2+) as a cofactor.

Its subcellular location is the cytoplasm. It carries out the reaction (R)-4'-phosphopantetheine + ATP + H(+) = 3'-dephospho-CoA + diphosphate. It functions in the pathway cofactor biosynthesis; coenzyme A biosynthesis; CoA from (R)-pantothenate: step 4/5. Reversibly transfers an adenylyl group from ATP to 4'-phosphopantetheine, yielding dephospho-CoA (dPCoA) and pyrophosphate. The chain is Phosphopantetheine adenylyltransferase from Yersinia pseudotuberculosis serotype I (strain IP32953).